The primary structure comprises 274 residues: Glutamate racemase (274 aa).

Residues 9 to 10 (DS) and 41 to 42 (YG) each bind substrate. Cysteine 73 acts as the Proton donor/acceptor in catalysis. Substrate is bound at residue 74-75 (NT). The active-site Proton donor/acceptor is cysteine 183. 184-185 (TH) serves as a coordination point for substrate.

It belongs to the aspartate/glutamate racemases family.

The catalysed reaction is L-glutamate = D-glutamate. The protein operates within cell wall biogenesis; peptidoglycan biosynthesis. Functionally, provides the (R)-glutamate required for cell wall biosynthesis. The polypeptide is Glutamate racemase (Shewanella baltica (strain OS155 / ATCC BAA-1091)).